We begin with the raw amino-acid sequence, 221 residues long: MGYVRVIYQFPDNLWWNECTNQVYYAQDPMKPERLIGTPSIIQTKLLKILCEYHPAPCPNDQIIKALWPHGFISSESLTQAIKRTRDFLNDEHKTLIENVKLQGYRINIIQVIVSENVVDEADCSQKKSVKERIKIEWGKINVVPYLVFSALYVALLPVIWWSYGQWYQHELAGITHDLRDLARLPGITIQKLSEQKLTFAIDQHQCSVNYEQKTLECTKN.

The ompR/PhoB-type DNA-binding region spans R5 to I109. A helical transmembrane segment spans residues V143 to S163.

The protein resides in the cell membrane. Functionally, involved in TCP pilus biogenesis. The sequence is that of Toxin coregulated pilus biosynthesis protein P (tcpP) from Vibrio cholerae serotype O1 (strain ATCC 39315 / El Tor Inaba N16961).